We begin with the raw amino-acid sequence, 272 residues long: Glutamate racemase (272 aa).

Substrate is bound by residues 16–17 (DS) and 48–49 (YG). Residue C79 is the Proton donor/acceptor of the active site. Residue 80–81 (NT) participates in substrate binding. The active-site Proton donor/acceptor is C191. 192-193 (TH) contacts substrate.

The protein belongs to the aspartate/glutamate racemases family.

The catalysed reaction is L-glutamate = D-glutamate. It participates in cell wall biogenesis; peptidoglycan biosynthesis. Functionally, provides the (R)-glutamate required for cell wall biosynthesis. The polypeptide is Glutamate racemase (Chlorobaculum parvum (strain DSM 263 / NCIMB 8327) (Chlorobium vibrioforme subsp. thiosulfatophilum)).